A 476-amino-acid polypeptide reads, in one-letter code: Tubulointerstitial nephritis antigen (476 aa).

Asn38 carries N-linked (GlcNAc...) asparagine glycosylation. The SMB domain occupies 59 to 107; it reads NFGCCEDRDDGCVTEFYAANALCYCDKFCDRENSDCCPDYKSFCREEKE. 6 disulfides stabilise this stretch: Cys63–Cys70, Cys70–Cys102, Cys81–Cys83, Cys81–Cys95, Cys87–Cys94, and Cys95–Cys102. N-linked (GlcNAc...) asparagine glycans are attached at residues Asn175, Asn314, Asn360, and Asn455.

This sequence belongs to the peptidase C1 family. In terms of processing, it has been suggested that the active SMB domain may be permitted considerable disulfide bond heterogeneity or variability, thus 2 alternate disulfide patterns based on 3D structures are described with 1 disulfide bond conserved in both. In terms of tissue distribution, expressed in the kidney cortex, small intestine and cornea.

The protein localises to the secreted. It localises to the extracellular space. It is found in the extracellular matrix. Its subcellular location is the basement membrane. Mediates adhesion of proximal tubule epithelial cells via integrins alpha3-beta1 and alphaV-beta3. This is a non catalytic peptidase C1 family protein. The protein is Tubulointerstitial nephritis antigen (TINAG) of Homo sapiens (Human).